The chain runs to 312 residues: tRNA dimethylallyltransferase (312 aa).

10 to 17 (GPTGVGKT) contacts ATP. Residue 12–17 (TGVGKT) participates in substrate binding.

Belongs to the IPP transferase family. In terms of assembly, monomer. Requires Mg(2+) as cofactor.

It catalyses the reaction adenosine(37) in tRNA + dimethylallyl diphosphate = N(6)-dimethylallyladenosine(37) in tRNA + diphosphate. Catalyzes the transfer of a dimethylallyl group onto the adenine at position 37 in tRNAs that read codons beginning with uridine, leading to the formation of N6-(dimethylallyl)adenosine (i(6)A). In Coprothermobacter proteolyticus (strain ATCC 35245 / DSM 5265 / OCM 4 / BT), this protein is tRNA dimethylallyltransferase.